The following is a 126-amino-acid chain: Large ribosomal subunit protein bL19 (126 aa).

This sequence belongs to the bacterial ribosomal protein bL19 family.

Its function is as follows. This protein is located at the 30S-50S ribosomal subunit interface and may play a role in the structure and function of the aminoacyl-tRNA binding site. The protein is Large ribosomal subunit protein bL19 of Prochlorococcus marinus (strain MIT 9312).